We begin with the raw amino-acid sequence, 157 residues long: Lipoprotein signal peptidase (157 aa).

The next 3 membrane-spanning stretches (helical) occupy residues 10–30, 58–78, and 84–104; these read LVFMGVFFLIFGVDQAIKYAI, FLEGGLKYLQILLILGLFIFL, and LFKNHAIEFGMVFGAGVSNVL. Residues D114 and D131 contribute to the active site. A helical membrane pass occupies residues 122–142; sequence FDFAIFNFADVMIDVGVGVLL.

Belongs to the peptidase A8 family.

The protein resides in the cell inner membrane. It catalyses the reaction Release of signal peptides from bacterial membrane prolipoproteins. Hydrolyzes -Xaa-Yaa-Zaa-|-(S,diacylglyceryl)Cys-, in which Xaa is hydrophobic (preferably Leu), and Yaa (Ala or Ser) and Zaa (Gly or Ala) have small, neutral side chains.. The protein operates within protein modification; lipoprotein biosynthesis (signal peptide cleavage). Functionally, this protein specifically catalyzes the removal of signal peptides from prolipoproteins. The chain is Lipoprotein signal peptidase from Helicobacter pylori (strain ATCC 700392 / 26695) (Campylobacter pylori).